We begin with the raw amino-acid sequence, 122 residues long: NADH-quinone oxidoreductase subunit A (122 aa).

3 helical membrane-spanning segments follow: residues 10 to 30 (LIIF…LTAG), 67 to 87 (FALL…WAVV), and 91 to 111 (LGLF…IGLI).

Belongs to the complex I subunit 3 family. In terms of assembly, NDH-1 is composed of 14 different subunits. Subunits NuoA, H, J, K, L, M, N constitute the membrane sector of the complex.

The protein resides in the cell membrane. The enzyme catalyses a quinone + NADH + 5 H(+)(in) = a quinol + NAD(+) + 4 H(+)(out). Its function is as follows. NDH-1 shuttles electrons from NADH, via FMN and iron-sulfur (Fe-S) centers, to quinones in the respiratory chain. The immediate electron acceptor for the enzyme in this species is believed to be a menaquinone. Couples the redox reaction to proton translocation (for every two electrons transferred, four hydrogen ions are translocated across the cytoplasmic membrane), and thus conserves the redox energy in a proton gradient. The chain is NADH-quinone oxidoreductase subunit A from Geobacillus kaustophilus (strain HTA426).